The primary structure comprises 212 residues: Large ribosomal subunit protein uL4 (212 aa).

Belongs to the universal ribosomal protein uL4 family. As to quaternary structure, part of the 50S ribosomal subunit.

Functionally, one of the primary rRNA binding proteins, this protein initially binds near the 5'-end of the 23S rRNA. It is important during the early stages of 50S assembly. It makes multiple contacts with different domains of the 23S rRNA in the assembled 50S subunit and ribosome. In terms of biological role, forms part of the polypeptide exit tunnel. The chain is Large ribosomal subunit protein uL4 from Caulobacter sp. (strain K31).